Reading from the N-terminus, the 218-residue chain is Ras-related protein RABA5e (218 aa).

Residue 19–26 (GDSAVGKS) coordinates GTP. An Effector region motif is present at residues 41–49 (SKATIGVEF). GTP-binding positions include 67 to 71 (DTAGQ), 125 to 128 (NKCD), and 155 to 156 (SA). S-geranylgeranyl cysteine attachment occurs at residues cysteine 214 and cysteine 215. Cysteine 215 bears the Cysteine methyl ester mark. The propeptide at 216–218 (SST) is removed in mature form.

Belongs to the small GTPase superfamily. Rab family.

It is found in the cell membrane. Intracellular vesicle trafficking and protein transport. This is Ras-related protein RABA5e (RABA5E) from Arabidopsis thaliana (Mouse-ear cress).